Consider the following 541-residue polypeptide: MNLRPEEISSVIKKQIENYKSELETVSVGTVLDVGDGIAHVYGLDEVMASELLEFPNGVYGMALNLEEDSVGCVLLGDETRVKEGDTVKRTGRVVEVPVGEELLGRIVNSLGQPLDGKGQISVDKYRPVESPAPSVVDRKPVDTPLQTGLKAIDSMIPIGRGQRELIIGDRQTGKTAIAVDTIINQKDQDVICIYVAIGQKASTVAQIAERLKEHGAMDYTVIVSASASEPAPLQYIAPYAGCAIGEYFMYEKNRDVLVVYDDLSKHAVAYRSMSLLLRRPPGREAYPGDVFYLHSRLLERAARLNEDMGGGSLTALPIIETQAGDVSAYIPTNVISITDGQIYLESELFFAGVRPAINVGISVSRVGGAAQTKAMKKVAGTLRLDLSQYRELEAFAQFGSDLDKATQRRLERGERIVEVLKQPQYTPMDMEDQVMIIYTVVNGHLDDIPVDNIERFEDEFLSYIHSNYPEIPETIKKTGDLDDETEEKLTGVIKEFKENFNVKENTLLNVEEGDTGEEENNEGHNKAEQDTEEKDTEEVV.

169-176 (GDRQTGKT) is an ATP binding site. Positions 506–541 (NTLLNVEEGDTGEEENNEGHNKAEQDTEEKDTEEVV) are disordered. 2 stretches are compositionally biased toward acidic residues: residues 512 to 521 (EEGDTGEEEN) and 531 to 541 (DTEEKDTEEVV).

This sequence belongs to the ATPase alpha/beta chains family. In terms of assembly, F-type ATPases have 2 components, CF(1) - the catalytic core - and CF(0) - the membrane proton channel. CF(1) has five subunits: alpha(3), beta(3), gamma(1), delta(1), epsilon(1). CF(0) has three main subunits: a(1), b(2) and c(9-12). The alpha and beta chains form an alternating ring which encloses part of the gamma chain. CF(1) is attached to CF(0) by a central stalk formed by the gamma and epsilon chains, while a peripheral stalk is formed by the delta and b chains.

The protein resides in the cell inner membrane. The enzyme catalyses ATP + H2O + 4 H(+)(in) = ADP + phosphate + 5 H(+)(out). Produces ATP from ADP in the presence of a proton gradient across the membrane. The alpha chain is a regulatory subunit. The sequence is that of ATP synthase subunit alpha from Halothermothrix orenii (strain H 168 / OCM 544 / DSM 9562).